A 267-amino-acid chain; its full sequence is Hydroxyethylthiazole kinase (267 aa).

Methionine 42 serves as a coordination point for substrate. Positions 118 and 162 each coordinate ATP. Glycine 189 lines the substrate pocket.

The protein belongs to the Thz kinase family. Requires Mg(2+) as cofactor.

It carries out the reaction 5-(2-hydroxyethyl)-4-methylthiazole + ATP = 4-methyl-5-(2-phosphooxyethyl)-thiazole + ADP + H(+). Its pathway is cofactor biosynthesis; thiamine diphosphate biosynthesis; 4-methyl-5-(2-phosphoethyl)-thiazole from 5-(2-hydroxyethyl)-4-methylthiazole: step 1/1. Its function is as follows. Catalyzes the phosphorylation of the hydroxyl group of 4-methyl-5-beta-hydroxyethylthiazole (THZ). The polypeptide is Hydroxyethylthiazole kinase (Rubrobacter xylanophilus (strain DSM 9941 / JCM 11954 / NBRC 16129 / PRD-1)).